A 355-amino-acid chain; its full sequence is uncharacterized protein (355 aa).

It belongs to the serpin family. Poxviruses subfamily.

This is an uncharacterized protein from Vertebrata (FPV).